A 515-amino-acid polypeptide reads, in one-letter code: MSVKIVIKPNTYFDSVSLMSISTRANKLDGVEQAFVAMATEMNKGVLKNLGLLTPELEQAKNGDLMIVINGKSGADNEQLLVEIEELFNTKAQSGSHEARYATIGSAKKHIPESNLAVISVNGLFAAREARQALQNDLNVMLFSDNVSVEDELALKQLAHEKGLLMMGPDCGTAIINGAALCFGNAVRRGNIGIVGASGTGSQELSVRIHEFGGGVSQLIGTGGRDLSEKIGGLMMLDAIGMLENDPQTEIIALISKPPAPAVARKVLERARACRKPVVVCFLDRGETPVDEQGLQFARGTKEAALKAVMLSGVKQENLDLHTLNQPLIADVRARLQPQQKYIRGLFCGGTLCDETMFAVMEKHGDVYSNIQPDPEFRLKDINRSIKHTFLDFGDDDFTNGKPHPMIDPTNRISRLIEEARDPEVAVIVMDFVLGFGSHEDPVGSTIETIKEAKAIAAAEGRELIILAYVLGTDLDTPSLEQQSQMLLDAGVILASSSTNTGLLAREFICKGEEA.

The protein belongs to the AllF family.

This is an uncharacterized protein from Escherichia coli (strain K12).